Consider the following 1074-residue polypeptide: Pleckstrin homology domain-containing family M member 1 (1074 aa).

The 143-residue stretch at 40-182 (TSEDGDANTM…LSFELSYKSA (143 aa)) folds into the RUN domain. Disordered regions lie at residues 214 to 244 (QRKESLDSISHSSGSEDIEVQHSGHKIRRNR), 272 to 336 (LQEN…MFQT), and 382 to 454 (DEKQ…PPQE). Phosphoserine is present on Ser218. Polar residues-rich tracts occupy residues 313–329 (SKAQVNSAPSSGPNQEP) and 393–404 (PAQSTSDQQPSS). A phosphoserine mark is found at Ser433, Ser436, and Ser491. The segment at 506–526 (GNAQPAPAPAPAPAPAPAPAP) is disordered. The span at 511 to 525 (APAPAPAPAPAPAPA) shows a compositional bias: pro residues. In terms of domain architecture, PH 1 spans 551–642 (GLMKLGTVAR…WLDRVREALQ (92 aa)). The short motif at 649 to 655 (EDEWVNI) is the LIR element. The interval 661-680 (AEDAPEAPPDSLPPYSTLLP) is disordered. The segment at 672–1074 (LPPYSTLLPE…RKYQEQNVVS (403 aa)) is interaction with RAB7A. The region spanning 701 to 795 (DAIKESLLYL…WRDLVRKVLA (95 aa)) is the PH 2 domain. A Phorbol-ester/DAG-type zinc finger spans residues 1004–1058 (QHVYHCDLCTQRGFICQICHHQDIIFPFEFDTTVRCAECRTVFHQSCQAVVRKGC).

As to quaternary structure, interacts (via N- and C-terminus) with RAB7A (GTP-bound form). Simultaneously interacts with RAB7A and ARL8B; bringing about clustering and fusion of late endosomes and lysosomes. Interacts (via RUN domain) with ARL8B (GTP-bound form); the interaction is required for PLEKHM1 localization to lysosomes and for ARL8B function in delivery and degradation of endocytic and autophagic cargo in lysosomes. PLEKHM1 and PLEKHM2 compete for interaction with ARL8B. Interacts with ARL8A; the interaction is weaker than with ARL8B. Interacts with VPS41, VPS11, VPS18, VPS33A and VPS39; indicative for an association with the HOPS complex; the interactions with, at least, VPS41, VPS11, VPS18 and VPS33A require ARL8B. Interacts with GABARAP, GABARAPL, GABARAPL2, MAP1LC3A, MAP1LC3B and MAP1LC3C. Interacts with PAFAH1B. Interacts (via N- and C-terminus) with NDEL1. Interacts (via C-terminus) with MAP3K7. Interacts (via N- and C-terminus) with FAM98A. Interacts (via C-terminus) with DEF8; this interaction is weak but increased in a RAB7A-dependent manner. May interact with sialyl-lex-positive protein.

The protein resides in the autolysosome membrane. It is found in the endosome membrane. It localises to the late endosome membrane. Its subcellular location is the lysosome membrane. In terms of biological role, acts as a multivalent adapter protein that regulates Rab7-dependent and HOPS complex-dependent fusion events in the endolysosomal system and couples autophagic and the endocytic trafficking pathways. Acts as a dual effector of RAB7A and ARL8B that simultaneously binds these GTPases, bringing about clustering and fusion of late endosomes and lysosomes. Required for late stages of endolysosomal maturation, facilitating both endocytosis-mediated degradation of growth factor receptors and autophagosome clearance. Interaction with Arl8b is a crucial factor in the terminal maturation of autophagosomes and to mediate autophagosome-lysosome fusion. Positively regulates lysosome peripheral distribution and ruffled border formation in osteoclasts. May be involved in negative regulation of endocytic transport from early endosome to late endosome/lysosome implicating its association with Rab7. May have a role in sialyl-lex-mediated transduction of apoptotic signals. Involved in bone resorption. This is Pleckstrin homology domain-containing family M member 1 from Mus musculus (Mouse).